A 392-amino-acid polypeptide reads, in one-letter code: Leucine-rich repeat-containing protein 74B (392 aa).

The segment at 24-46 (RLSGVPEAEQGPEANWDSDLETE) is disordered. LRR repeat units lie at residues 106–129 (NPYVKRLDLRDNGLCGAGAEALAG), 134–157 (SSSIHDVDLSENQLGVAGAQALCA), 162–185 (NQAMRKMQLSGNGLEEQAAQHLAE), 192–213 (DLKSLDLSYNQLNDQAGETLGP), 220–241 (GLTELNVSWNHLRGPGAVAFAR), 248–269 (FLKVLDISYNGFGDPGASAVGE), 276–297 (VLEELNMSNNRISAMGALSLGL), 304–325 (TLRILVVSRNPMRSEGCFGLLK), and 334–356 (ALELLDFSDIQVNAEFDGLASSV).

This Homo sapiens (Human) protein is Leucine-rich repeat-containing protein 74B.